The following is a 500-amino-acid chain: Probable cytochrome P450 514A2 (500 aa).

The chain crosses the membrane as a helical span at residues 4–24 (IYTIILTIIILVLIISIKDLF). A heme-binding site is contributed by Cys-446.

This sequence belongs to the cytochrome P450 family. The cofactor is heme.

The protein localises to the membrane. This chain is Probable cytochrome P450 514A2 (cyp514A2), found in Dictyostelium discoideum (Social amoeba).